The primary structure comprises 457 residues: Secreted effector kinase SteC (457 aa).

An ATP-binding site is contributed by lysine 256.

It belongs to the protein kinase superfamily. Autophosphorylated.

The protein localises to the secreted. It localises to the host cytoplasm. Functionally, effector proteins function to alter host cell physiology and promote bacterial survival in host tissues. This protein is a kinase, which is required for SPI-2 T3SS-dependent F-actin meshwork formation in infected host cells. The chain is Secreted effector kinase SteC (steC) from Salmonella typhimurium (strain LT2 / SGSC1412 / ATCC 700720).